We begin with the raw amino-acid sequence, 403 residues long: Imidazolonepropionase (403 aa).

Fe(3+)-binding residues include histidine 69 and histidine 71. The Zn(2+) site is built by histidine 69 and histidine 71. 4-imidazolone-5-propanoate contacts are provided by arginine 78, tyrosine 141, and histidine 174. An N-formimidoyl-L-glutamate-binding site is contributed by tyrosine 141. Histidine 239 is a Fe(3+) binding site. Histidine 239 contributes to the Zn(2+) binding site. Residue glutamine 242 coordinates 4-imidazolone-5-propanoate. Aspartate 314 contacts Fe(3+). Zn(2+) is bound at residue aspartate 314. 2 residues coordinate N-formimidoyl-L-glutamate: asparagine 316 and glycine 318. Position 319 (serine 319) interacts with 4-imidazolone-5-propanoate.

The protein belongs to the metallo-dependent hydrolases superfamily. HutI family. Zn(2+) is required as a cofactor. Requires Fe(3+) as cofactor.

It localises to the cytoplasm. It carries out the reaction 4-imidazolone-5-propanoate + H2O = N-formimidoyl-L-glutamate. Its pathway is amino-acid degradation; L-histidine degradation into L-glutamate; N-formimidoyl-L-glutamate from L-histidine: step 3/3. Catalyzes the hydrolytic cleavage of the carbon-nitrogen bond in imidazolone-5-propanoate to yield N-formimidoyl-L-glutamate. It is the third step in the universal histidine degradation pathway. The protein is Imidazolonepropionase of Legionella pneumophila (strain Lens).